Consider the following 36-residue polypeptide: MARITLRQLLDHAAEHGYGVPAFQHQQYGAGACIME.

The polypeptide is Fructose-1,6-/sedoheptulose-1,7-bisphosphate aldolase (cbbA) (Nitrobacter vulgaris).